Reading from the N-terminus, the 50-residue chain is Tubulin alpha chain (50 aa).

N28 is a binding site for GTP. E40 is an active-site residue.

Belongs to the tubulin family. As to quaternary structure, dimer of alpha and beta chains. A typical microtubule is a hollow water-filled tube with an outer diameter of 25 nm and an inner diameter of 15 nM. Alpha-beta heterodimers associate head-to-tail to form protofilaments running lengthwise along the microtubule wall with the beta-tubulin subunit facing the microtubule plus end conferring a structural polarity. Microtubules usually have 13 protofilaments but different protofilament numbers can be found in some organisms and specialized cells. Mg(2+) serves as cofactor.

The protein localises to the cytoplasm. Its subcellular location is the cytoskeleton. The enzyme catalyses GTP + H2O = GDP + phosphate + H(+). Functionally, tubulin is the major constituent of microtubules, a cylinder consisting of laterally associated linear protofilaments composed of alpha- and beta-tubulin heterodimers. Microtubules grow by the addition of GTP-tubulin dimers to the microtubule end, where a stabilizing cap forms. Below the cap, tubulin dimers are in GDP-bound state, owing to GTPase activity of alpha-tubulin. The chain is Tubulin alpha chain from Populus euphratica (Euphrates poplar).